The chain runs to 319 residues: Beta-sarcoglycan (319 aa).

Residues 1-10 (MAAAAAAAAA) show a composition bias toward low complexity. The disordered stretch occupies residues 1–33 (MAAAAAAAAAEQQSSNGPVKKSMREKAVERRNV). The Cytoplasmic segment spans residues 1-66 (MAAAAAAAAA…GLRGRKGNLA (66 aa)). Positions 22–33 (SMREKAVERRNV) are enriched in basic and acidic residues. Residues 67-87 (ICVIILLFILAVINLIITLVI) form a helical; Signal-anchor for type II membrane protein membrane-spanning segment. Residues 88–318 (WAVIRIGPNG…QISDNPCGNT (231 aa)) are Extracellular-facing. Residues N159, N212, and N259 are each glycosylated (N-linked (GlcNAc...) asparagine). 2 disulfides stabilise this stretch: C289–C315 and C291–C308.

Belongs to the sarcoglycan beta/delta/gamma/zeta family. As to quaternary structure, cross-link to form 2 major subcomplexes: one consisting of SGCB, SGCD and SGCG and the other consisting of SGCB and SGCD. The association between SGCB and SGCG is particularly strong while SGCA is loosely associated with the other sarcoglycans. In terms of processing, disulfide bonds are present.

The protein resides in the cell membrane. It is found in the sarcolemma. The protein localises to the cytoplasm. It localises to the cytoskeleton. Component of the sarcoglycan complex, a subcomplex of the dystrophin-glycoprotein complex which forms a link between the F-actin cytoskeleton and the extracellular matrix. The sequence is that of Beta-sarcoglycan (SGCB) from Pongo abelii (Sumatran orangutan).